Here is an 81-residue protein sequence, read N- to C-terminus: Small ribosomal subunit protein bS16 (81 aa).

The protein belongs to the bacterial ribosomal protein bS16 family.

The sequence is that of Small ribosomal subunit protein bS16 from Lachnospira eligens (strain ATCC 27750 / DSM 3376 / VPI C15-48 / C15-B4) (Eubacterium eligens).